Reading from the N-terminus, the 557-residue chain is CCR4-NOT transcription complex subunit 6 (557 aa).

LRR repeat units follow at residues 52-73 (HLTA…IAKL), 75-96 (NLVY…LGNM), 98-120 (SLRE…GKLF), and 121-143 (QLQT…YQEP). The interval 153–557 (LLDNLSGTAK…VNGIHLPGRR (405 aa)) is nuclease domain. E240 is a Mg(2+) binding site. Positions 240, 276, 361, and 366 each coordinate substrate. Mg(2+) is bound at residue D412. D412 serves as the catalytic Proton donor/acceptor. 3 residues coordinate substrate: N414, N481, and F486.

Belongs to the CCR4/nocturin family. As to quaternary structure, component of the CCR4-NOT complex; distinct complexes seem to exist that differ in the participation of probably mutually exclusive catalytic subunits; the complex contains two deadenylase subunits, CNOT6 or CNOT6L, and CNOT7 or CNOT8. Interacts with CNOT7 and CNOT8. Interacts with UNR. Interacts with ZFP36L1 (via N-terminus). Interacts with ZNF335. Requires Mg(2+) as cofactor.

Its subcellular location is the cytoplasm. The protein resides in the nucleus. The enzyme catalyses Exonucleolytic cleavage of poly(A) to 5'-AMP.. In terms of biological role, poly(A) nuclease with 3'-5' RNase activity. Catalytic component of the CCR4-NOT complex which is one of the major cellular mRNA deadenylases and is linked to various cellular processes including bulk mRNA degradation, miRNA-mediated repression, translational repression during translational initiation and general transcription regulation. Additional complex functions may be a consequence of its influence on mRNA expression. Involved in mRNA decay mediated by the major-protein-coding determinant of instability (mCRD) of the FOS gene in the cytoplasm. In the presence of ZNF335, enhances ligand-dependent transcriptional activity of nuclear hormone receptors, including RARA. The increase of ligand-dependent ESR1-mediated transcription is much smaller, if any. Mediates cell proliferation and cell survival and prevents cellular senescence. The chain is CCR4-NOT transcription complex subunit 6 (CNOT6) from Homo sapiens (Human).